The following is a 186-amino-acid chain: Translation initiation factor IF-3 (186 aa).

Belongs to the IF-3 family. In terms of assembly, monomer.

The protein localises to the cytoplasm. IF-3 binds to the 30S ribosomal subunit and shifts the equilibrium between 70S ribosomes and their 50S and 30S subunits in favor of the free subunits, thus enhancing the availability of 30S subunits on which protein synthesis initiation begins. This is Translation initiation factor IF-3 from Chlamydia caviae (strain ATCC VR-813 / DSM 19441 / 03DC25 / GPIC) (Chlamydophila caviae).